The chain runs to 823 residues: Hypoxia-inducible factor 1-alpha (823 aa).

Positions 1 to 30 (MEGAGGANDKKKISSERRKEKSRDAARSRR) are disordered. The interaction with TSGA10 stretch occupies residues 1-401 (MEGAGGANDK…KEPDALTLLA (401 aa)). Residues 8–30 (NDKKKISSERRKEKSRDAARSRR) are compositionally biased toward basic and acidic residues. The 54-residue stretch at 17–70 (RRKEKSRDAARSRRSKESEVFYELAHQLPLPHNVSSHLDKASVMRLTISYLRVR) folds into the bHLH domain. The tract at residues 21-30 (KSRDAARSRR) is DNA-binding. Residues 85 to 158 (KAQMNCFYLK…THRNGLVKKG (74 aa)) form the PAS 1 domain. A required for heterodimer formation with ARNT region spans residues 170 to 191 (RMKCTLTSRGRTMNIKSATWKV). The PAS 2 domain maps to 228-298 (PHPSNIEIPL…KTHHDMFTKG (71 aa)). Serine 247 is modified (phosphoserine; by CK1). In terms of domain architecture, PAC spans 302–345 (TGQYRMLAKRGGYVWIETQATVIYNTKNSQPQCIVCVNYVVSGI). The segment at 401–600 (APAAGDTIIS…QSASTNTVFQ (200 aa)) is ODD. Proline 402 is subject to 4-hydroxyproline. The span at 494–517 (IQDQPASPSDGSTRQSSPEPNSPS) shows a compositional bias: polar residues. Residues 494–521 (IQDQPASPSDGSTRQSSPEPNSPSEYCF) are disordered. Residues 531-575 (FKLELVEKLFAEDTEAKNPFSTQDTDLDLEMLAPYIPMDDDFQLR) form an NTAD region. N6-acetyllysine; alternate is present on lysine 532. Lysine 532 is covalently cross-linked (Glycyl lysine isopeptide (Lys-Gly) (interchain with G-Cter in ubiquitin); alternate). Glycyl lysine isopeptide (Lys-Gly) (interchain with G-Cter in ubiquitin) cross-links involve residues lysine 538 and lysine 547. Serine 551 is modified (phosphoserine; by GSK3-beta). Threonine 555 is subject to Phosphothreonine; by GSK3-beta. Proline 564 bears the 4-hydroxyproline mark. Serine 576 bears the Phosphoserine; by PLK3 mark. An ID region spans residues 576–782 (SFDQLSPLEN…SDLACRLLGQ (207 aa)). Disordered regions lie at residues 581–602 (SPLE…FQPT) and 639–685 (PSPP…PRSP). Position 589 is a phosphoserine; by GSK3-beta (serine 589). Residues 651–666 (ATTSPYSDTGSRTASP) show a composition bias toward polar residues. At serine 654 the chain carries Phosphoserine; by PLK3. Lysine 706 carries the N6-acetyllysine modification. Residues 715–721 (RKRKIEH) carry the Nuclear localization signal motif. The segment at 783-823 (SMDESGLPQLTSYDCEVNAPIQGSRNLLQGEELLRALDQVN) is CTAD. Position 797 is an S-nitrosocysteine (cysteine 797). Asparagine 800 is modified ((3S)-3-hydroxyasparagine).

Interacts with the ARNT; forms a heterodimer that binds core DNA sequence 5'-TACGTG-3' within the hypoxia response element (HRE) of target gene promoters. Interacts with COPS5; the interaction increases the transcriptional activity of HIF1A through increased stability. Interacts with EP300 (via TAZ-type 1 domains); the interaction is stimulated in response to hypoxia and inhibited by CITED2. Interacts with CREBBP (via TAZ-type 1 domains). Interacts with NCOA1, NCOA2, APEX1 and HSP90. Interacts (hydroxylated within the ODD domain) with VHLL (via beta domain); the interaction, leads to polyubiquitination and subsequent HIF1A proteasomal degradation. During hypoxia, sumoylated HIF1A also binds VHL; the interaction promotes the ubiquitination of HIF1A. Interacts with SENP1; the interaction desumoylates HIF1A resulting in stabilization and activation of transcription. Interacts (via the ODD domain) with NAA10; the interaction appears not to acetylate HIF1A nor have any affect on protein stability, during hypoxia. Interacts with RWDD3; the interaction enhances HIF1A sumoylation. Interacts with TSGA10. Interacts with HIF3A. Interacts with RORA (via the DNA binding domain); the interaction enhances HIF1A transcription under hypoxia through increasing protein stability. Interaction with PSMA7 inhibits the transactivation activity of HIF1A under both normoxic and hypoxia-mimicking conditions. Interacts with USP20. Interacts with RACK1; promotes HIF1A ubiquitination and proteasome-mediated degradation. Interacts (via N-terminus) with USP19. Interacts with SIRT2. Interacts (deacetylated form) with EGLN1. Interacts with CBFA2T3. Interacts with HSP90AA1 and HSP90AB1. Interacts with DCUN1D1; this interaction increases the interaction between VHL and DCUN1D1. Interacts with HIF1AN. S-nitrosylation of Cys-797 may be responsible for increased recruitment of p300 coactivator necessary for transcriptional activity of HIF-1 complex. Post-translationally, acetylation of Lys-532 by ARD1 increases interaction with VHL and stimulates subsequent proteasomal degradation. Deacetylation of Lys-706 by SIRT2 increases its interaction with and hydroxylation by EGLN1 thereby inactivating HIF1A activity by inducing its proteasomal degradation. In terms of processing, ubiquitinated; in normoxia, following hydroxylation and interaction with VHL. Lys-532 appears to be the principal site of ubiquitination. Clioquinol, the Cu/Zn-chelator, inhibits ubiquitination through preventing hydroxylation at Asn-800. Ubiquitinated by E3 ligase VHL. Deubiquitinated by UCHL1. Requires phosphorylation for DNA-binding. Phosphorylation at Ser-247 by CSNK1D/CK1 represses kinase activity and impairs ARNT binding. Phosphorylation by GSK3-beta and PLK3 promote degradation by the proteasome. Post-translationally, the iron and 2-oxoglutarate dependent 3-hydroxylation of asparagine is (S) stereospecific within HIF CTAD domains. In terms of processing, sumoylated; with SUMO1 under hypoxia. Sumoylation is enhanced through interaction with RWDD3. Both sumoylation and desumoylation seem to be involved in the regulation of its stability during hypoxia. Sumoylation can promote either its stabilization or its VHL-dependent degradation by promoting hydroxyproline-independent HIF1A-VHL complex binding, thus leading to HIF1A ubiquitination and proteasomal degradation. Desumoylation by SENP1 increases its stability amd transcriptional activity. There is a disaccord between various publications on the effect of sumoylation and desumoylation on its stability and transcriptional activity. In normoxia, is hydroxylated on Pro-402 and Pro-564 in the oxygen-dependent degradation domain (ODD) by EGLN1/PHD2 and EGLN2/PHD1. EGLN3/PHD3 has also been shown to hydroxylate Pro-564. The hydroxylated prolines promote interaction with VHL, initiating rapid ubiquitination and subsequent proteasomal degradation. Deubiquitinated by USP20. Under hypoxia, proline hydroxylation is impaired and ubiquitination is attenuated, resulting in stabilization. In normoxia, is hydroxylated on Asn-800 by HIF1AN, thus abrogating interaction with CREBBP and EP300 and preventing transcriptional activation. Repressed by iron ion, via Fe(2+) prolyl hydroxylase (PHD) enzymes-mediated hydroxylation and subsequent proteasomal degradation.

The protein localises to the cytoplasm. The protein resides in the nucleus. With respect to regulation, induced by reactive oxygen species (ROS). Functionally, functions as a master transcriptional regulator of the adaptive response to hypoxia. Under hypoxic conditions, activates the transcription of over 40 genes, including erythropoietin, glucose transporters, glycolytic enzymes, vascular endothelial growth factor, HILPDA, and other genes whose protein products increase oxygen delivery or facilitate metabolic adaptation to hypoxia. Plays an essential role in embryonic vascularization, tumor angiogenesis and pathophysiology of ischemic disease. Heterodimerizes with ARNT; heterodimer binds to core DNA sequence 5'-TACGTG-3' within the hypoxia response element (HRE) of target gene promoters. Activation requires recruitment of transcriptional coactivators such as CREBBP and EP300. Activity is enhanced by interaction with NCOA1 and/or NCOA2. Interaction with redox regulatory protein APEX1 seems to activate CTAD and potentiates activation by NCOA1 and CREBBP. Involved in the axonal distribution and transport of mitochondria in neurons during hypoxia. This Bos taurus (Bovine) protein is Hypoxia-inducible factor 1-alpha (HIF1A).